The chain runs to 333 residues: Cell shape-determining protein Mbl (333 aa).

Residues 12 to 14 (TAN), 156 to 158 (GGT), 204 to 207 (EDIK), and 284 to 287 (GGAL) contribute to the ATP site.

The protein belongs to the FtsA/MreB family. As to quaternary structure, forms polymers.

It localises to the cytoplasm. Forms membrane-associated dynamic filaments that are essential for cell shape determination. Acts by regulating cell wall synthesis and cell elongation, and thus cell shape. A feedback loop between cell geometry and Mbl localization may maintain elongated cell shape by targeting cell wall growth to regions of negative cell wall curvature. This is Cell shape-determining protein Mbl from Bacillus cereus (strain ATCC 10987 / NRS 248).